Consider the following 364-residue polypeptide: WAT1-related protein At3g30340 (364 aa).

The next 10 helical transmembrane spans lie at 9–29 (WKAV…NVMF), 41–61 (VATT…AIFL), 76–96 (SLFF…LIGL), 102–122 (TFSL…ALVF), 138–158 (LLGT…KGTA), 183–203 (WAMG…WFIV), 215–235 (YTST…LSLI), 251–271 (VLAL…GMSW), 277–297 (GAVF…IFSF), and 304–324 (IYCG…ILLW). 2 EamA domains span residues 26–152 (NVMF…LVLT) and 195–323 (IIWS…YILL).

This sequence belongs to the drug/metabolite transporter (DMT) superfamily. Plant drug/metabolite exporter (P-DME) (TC 2.A.7.4) family.

Its subcellular location is the membrane. This is WAT1-related protein At3g30340 from Arabidopsis thaliana (Mouse-ear cress).